Consider the following 227-residue polypeptide: ATP-dependent dethiobiotin synthetase BioD (227 aa).

12–17 contributes to the ATP binding site; the sequence is DAGKTH. Residue threonine 16 participates in Mg(2+) binding. Residue lysine 37 is part of the active site. Serine 41 provides a ligand contact to substrate. ATP is bound by residues aspartate 54, 116-119, 176-177, and 205-207; these read EGAG, NQ, and PYS. Mg(2+) contacts are provided by aspartate 54 and glutamate 116.

Belongs to the dethiobiotin synthetase family. In terms of assembly, homodimer. It depends on Mg(2+) as a cofactor.

Its subcellular location is the cytoplasm. The enzyme catalyses (7R,8S)-7,8-diammoniononanoate + CO2 + ATP = (4R,5S)-dethiobiotin + ADP + phosphate + 3 H(+). The protein operates within cofactor biosynthesis; biotin biosynthesis; biotin from 7,8-diaminononanoate: step 1/2. In terms of biological role, catalyzes a mechanistically unusual reaction, the ATP-dependent insertion of CO2 between the N7 and N8 nitrogen atoms of 7,8-diaminopelargonic acid (DAPA, also called 7,8-diammoniononanoate) to form a ureido ring. This Pseudoalteromonas translucida (strain TAC 125) protein is ATP-dependent dethiobiotin synthetase BioD.